Consider the following 1038-residue polypeptide: Translation initiation factor IF-2 (1038 aa).

Disordered regions lie at residues 39-346 and 403-451; these read TISE…KWQE and KPKA…PEKV. A compositionally biased stretch (polar residues) spans 103 to 125; the sequence is RNTTSNAPEASVANNQIASSEAN. Positions 157 to 176 are enriched in low complexity; it reads PQKPAAPEAEPEAQSQAPAK. 2 stretches are compositionally biased toward basic and acidic residues: residues 178–197 and 226–243; these read AVEK…ERQP and PILK…DQAK. Residues 407–423 are compositionally biased toward low complexity; it reads ARAATAATAAPISSPTT. The span at 431-450 shows a compositional bias: basic and acidic residues; it reads NNRDQNRRQETEVKRERPEK. Residues 532-705 enclose the tr-type G domain; that stretch reads RRPPVVTIMG…LLVAEVGELS (174 aa). The G1 stretch occupies residues 541–548; the sequence is GHVDHGKT. A GTP-binding site is contributed by 541–548; that stretch reads GHVDHGKT. The segment at 566-570 is G2; the sequence is GITQH. Positions 591 to 594 are G3; the sequence is DTPG. GTP is bound by residues 591-595 and 645-648; these read DTPGH and NKID. The tract at residues 645–648 is G4; that stretch reads NKID. Residues 681–683 form a G5 region; that stretch reads SAI.

Belongs to the TRAFAC class translation factor GTPase superfamily. Classic translation factor GTPase family. IF-2 subfamily.

It is found in the cytoplasm. One of the essential components for the initiation of protein synthesis. Protects formylmethionyl-tRNA from spontaneous hydrolysis and promotes its binding to the 30S ribosomal subunits. Also involved in the hydrolysis of GTP during the formation of the 70S ribosomal complex. The chain is Translation initiation factor IF-2 from Trichormus variabilis (strain ATCC 29413 / PCC 7937) (Anabaena variabilis).